The sequence spans 108 residues: Evasin P1127 (108 aa).

The first 28 residues, 1–28, serve as a signal peptide directing secretion; it reads MEAKTFAFLEIAMFIALGIQTFVAVTDA. Disulfide bonds link cysteine 41–cysteine 63, cysteine 45–cysteine 65, and cysteine 56–cysteine 76. The N-linked (GlcNAc...) asparagine glycan is linked to asparagine 44. N-linked (GlcNAc...) asparagine glycosylation occurs at asparagine 89.

The protein resides in the secreted. Functionally, salivary chemokine-binding protein which binds to host chemokines CXCL1, CXCL2, CXCL3, CXCL5 and CXCL8. The chain is Evasin P1127 from Ixodes ricinus (Common tick).